We begin with the raw amino-acid sequence, 185 residues long: Ribosome-recycling factor (185 aa).

Belongs to the RRF family.

Its subcellular location is the cytoplasm. Responsible for the release of ribosomes from messenger RNA at the termination of protein biosynthesis. May increase the efficiency of translation by recycling ribosomes from one round of translation to another. The polypeptide is Ribosome-recycling factor (Lacticaseibacillus casei (strain BL23) (Lactobacillus casei)).